The sequence spans 465 residues: tRNA modification GTPase MnmE (465 aa).

Residues Arg-21, Glu-85, and Lys-124 each contribute to the (6S)-5-formyl-5,6,7,8-tetrahydrofolate site. Residues 220 to 387 (GVPVAIIGET…LQKMLINAAH (168 aa)) enclose the TrmE-type G domain. Asn-230 serves as a coordination point for K(+). Residues 230-235 (NAGKST), 249-255 (SDIHGTT), 274-277 (DTAG), and 337-340 (NKAD) each bind GTP. Mg(2+) is bound at residue Ser-234. Residues Ser-249, Ile-251, and Thr-254 each contribute to the K(+) site. Thr-255 lines the Mg(2+) pocket. Residue Lys-465 coordinates (6S)-5-formyl-5,6,7,8-tetrahydrofolate.

This sequence belongs to the TRAFAC class TrmE-Era-EngA-EngB-Septin-like GTPase superfamily. TrmE GTPase family. In terms of assembly, homodimer. Heterotetramer of two MnmE and two MnmG subunits. K(+) is required as a cofactor.

It localises to the cytoplasm. Its function is as follows. Exhibits a very high intrinsic GTPase hydrolysis rate. Involved in the addition of a carboxymethylaminomethyl (cmnm) group at the wobble position (U34) of certain tRNAs, forming tRNA-cmnm(5)s(2)U34. This Bacteroides thetaiotaomicron (strain ATCC 29148 / DSM 2079 / JCM 5827 / CCUG 10774 / NCTC 10582 / VPI-5482 / E50) protein is tRNA modification GTPase MnmE.